The chain runs to 35 residues: Cupiennin-1d (35 aa).

At glutamate 35 the chain carries Glutamic acid 1-amide.

This sequence belongs to the cationic peptide 04 (cupiennin) family. 01 subfamily. As to expression, expressed by the venom gland.

Its subcellular location is the secreted. In terms of biological role, has antimicrobial activity against B.subtilis, E.coli, E.faecalis, P.aeruginosa, and S.aureus. Has insecticidal and hemolytic activities. Probably acts by disturbing membrane function with its amphipathic structure. The chain is Cupiennin-1d from Cupiennius salei (American wandering spider).